The sequence spans 474 residues: Glycogen synthase (474 aa).

ADP-alpha-D-glucose is bound at residue K12.

Belongs to the glycosyltransferase 1 family. Bacterial/plant glycogen synthase subfamily.

The catalysed reaction is [(1-&gt;4)-alpha-D-glucosyl](n) + ADP-alpha-D-glucose = [(1-&gt;4)-alpha-D-glucosyl](n+1) + ADP + H(+). Its pathway is glycan biosynthesis; glycogen biosynthesis. Synthesizes alpha-1,4-glucan chains using ADP-glucose. The chain is Glycogen synthase from Xanthomonas axonopodis pv. citri (strain 306).